The chain runs to 982 residues: Serine/threonine-protein kinase PknD (982 aa).

The Protein kinase domain maps to 51–342; the sequence is YQIIKSIGKG…ELIRDIENYL (292 aa). ATP is bound by residues 57–65 and lysine 80; that span reads IGKGGMGEV. The active-site Proton acceptor is aspartate 186.

It belongs to the protein kinase superfamily. Ser/Thr protein kinase family. Autophosphorylated on serine and threonine residues.

The enzyme catalyses L-seryl-[protein] + ATP = O-phospho-L-seryl-[protein] + ADP + H(+). It carries out the reaction L-threonyl-[protein] + ATP = O-phospho-L-threonyl-[protein] + ADP + H(+). Functionally, together with the serine/threonine kinase Pkn1, may play a role in the specific interactions with host proteins during intracellular growth. The sequence is that of Serine/threonine-protein kinase PknD from Protochlamydia amoebophila (strain UWE25).